The following is a 241-amino-acid chain: Small ribosomal subunit protein uS3 (241 aa).

Positions 39–107 (IREVLMKNLK…EVVINIVEVR (69 aa)) constitute a KH type-2 domain. The segment at 219-241 (MAELDHAGGGGGGERRRRERDAA) is disordered. Residues 231 to 241 (GERRRRERDAA) are compositionally biased toward basic and acidic residues.

This sequence belongs to the universal ribosomal protein uS3 family. Part of the 30S ribosomal subunit. Forms a tight complex with proteins S10 and S14.

Its function is as follows. Binds the lower part of the 30S subunit head. Binds mRNA in the 70S ribosome, positioning it for translation. The protein is Small ribosomal subunit protein uS3 of Beijerinckia indica subsp. indica (strain ATCC 9039 / DSM 1715 / NCIMB 8712).